The following is a 167-amino-acid chain: SsrA-binding protein (167 aa).

The tract at residues 139–167 (QAHDKRHAEKEREWQRDKQRIMRAHNRNA) is disordered. Residues 144–158 (RHAEKEREWQRDKQR) are compositionally biased toward basic and acidic residues.

This sequence belongs to the SmpB family.

The protein localises to the cytoplasm. In terms of biological role, required for rescue of stalled ribosomes mediated by trans-translation. Binds to transfer-messenger RNA (tmRNA), required for stable association of tmRNA with ribosomes. tmRNA and SmpB together mimic tRNA shape, replacing the anticodon stem-loop with SmpB. tmRNA is encoded by the ssrA gene; the 2 termini fold to resemble tRNA(Ala) and it encodes a 'tag peptide', a short internal open reading frame. During trans-translation Ala-aminoacylated tmRNA acts like a tRNA, entering the A-site of stalled ribosomes, displacing the stalled mRNA. The ribosome then switches to translate the ORF on the tmRNA; the nascent peptide is terminated with the 'tag peptide' encoded by the tmRNA and targeted for degradation. The ribosome is freed to recommence translation, which seems to be the essential function of trans-translation. The chain is SsrA-binding protein from Xylella fastidiosa (strain M23).